The sequence spans 304 residues: Ribosomal RNA small subunit methyltransferase H (304 aa).

S-adenosyl-L-methionine is bound by residues 37-39, aspartate 57, phenylalanine 79, aspartate 100, and histidine 107; that span reads GGH.

The protein belongs to the methyltransferase superfamily. RsmH family.

It is found in the cytoplasm. The catalysed reaction is cytidine(1402) in 16S rRNA + S-adenosyl-L-methionine = N(4)-methylcytidine(1402) in 16S rRNA + S-adenosyl-L-homocysteine + H(+). Its function is as follows. Specifically methylates the N4 position of cytidine in position 1402 (C1402) of 16S rRNA. This is Ribosomal RNA small subunit methyltransferase H from Phocaeicola vulgatus (strain ATCC 8482 / DSM 1447 / JCM 5826 / CCUG 4940 / NBRC 14291 / NCTC 11154) (Bacteroides vulgatus).